The primary structure comprises 523 residues: Heparanase (523 aa).

The first 18 residues, 1-18 (MLVLLLLVLLLAVPPRRT), serve as a signal peptide directing secretion. Heparan sulfate group contacts are provided by residues 42–44 (DAS), T77, and 137–141 (KKHKN). N141 and N196 each carry an N-linked (GlcNAc...) asparagine glycan. The active-site Proton donor is E204. Residues 250-260 (QPRKHTQHLLR), H276, and R283 each bind heparan sulfate group. The required for heterodimerization with the heparanase 8 kDa subunit stretch occupies residues 268 to 397 (KAIDSVTWHH…LLYKRLVGTR (130 aa)). E323 functions as the Nucleophile in the catalytic mechanism. Heparan sulfate group contacts are provided by residues 328-330 (YGG) and 369-371 (GSY). A disulfide bridge links C417 with C522. 2 N-linked (GlcNAc...) asparagine glycosylation sites follow: N436 and N439. The segment at 507 to 523 (FSYGFYVIRNAKAIACI) is required for transferring proheparanase to the Golgi apparatus, secretion and subsequent enzyme activity and for enhancement of PKB/AKT1 phosphorylation.

It belongs to the glycosyl hydrolase 79 family. In terms of assembly, heterodimer; the active enzyme is a heterodimer of the 60 kDa and 45 kDa proteolytic products. N-glycosylated. In terms of processing, proteolytically cleaved to produce a 60 kDa and a 45 kDa product.

The protein localises to the secreted. The enzyme catalyses endohydrolysis of (1-&gt;4)-beta-D-glycosidic bonds of heparan sulfate chains in heparan sulfate proteoglycan.. Endoglycosidase that cleaves heparan sulfate proteoglycans (HSPGs) into heparan sulfate side chains and core proteoglycans. Participates in extracellular matrix (ECM) degradation and remodeling. Selectively cleaves the linkage between a glucuronic acid unit and an N-sulfo glucosamine unit carrying either a 3-O-sulfo or a 6-O-sulfo group. Can also cleave the linkage between a glucuronic acid unit and an N-sulfo glucosamine unit carrying a 2-O-sulfo group, but not linkages between a glucuronic acid unit and a 2-O-sulfated iduronic acid moiety. Increases cell adhesion to the extracellular matrix (ECM), independent of its enzymatic activity. In Gallus gallus (Chicken), this protein is Heparanase (HPSE).